We begin with the raw amino-acid sequence, 96 residues long: Small ribosomal subunit protein bS6 (96 aa).

It belongs to the bacterial ribosomal protein bS6 family.

Binds together with bS18 to 16S ribosomal RNA. The sequence is that of Small ribosomal subunit protein bS6 from Gloeobacter violaceus (strain ATCC 29082 / PCC 7421).